A 229-amino-acid chain; its full sequence is Protein FMP52-2, mitochondrial (229 aa).

A mitochondrion-targeting transit peptide spans 1–45; the sequence is MAAGAFILGSTGLCGYQMLRFAEKSSLFDKISTVGRKLPDFKSEK.

Belongs to the FMP52 family.

It is found in the mitochondrion outer membrane. The chain is Protein FMP52-2, mitochondrial (FMP522) from Scheffersomyces stipitis (strain ATCC 58785 / CBS 6054 / NBRC 10063 / NRRL Y-11545) (Yeast).